A 376-amino-acid chain; its full sequence is Chorismate synthase (376 aa).

2 residues coordinate NADP(+): Arg39 and Arg45. Residues 115–117 (RSS), Gly276, 291–295 (KPIPT), and Arg317 each bind FMN.

The protein belongs to the chorismate synthase family. In terms of assembly, homotetramer. Requires FMNH2 as cofactor.

The catalysed reaction is 5-O-(1-carboxyvinyl)-3-phosphoshikimate = chorismate + phosphate. Its pathway is metabolic intermediate biosynthesis; chorismate biosynthesis; chorismate from D-erythrose 4-phosphate and phosphoenolpyruvate: step 7/7. Functionally, catalyzes the anti-1,4-elimination of the C-3 phosphate and the C-6 proR hydrogen from 5-enolpyruvylshikimate-3-phosphate (EPSP) to yield chorismate, which is the branch point compound that serves as the starting substrate for the three terminal pathways of aromatic amino acid biosynthesis. This reaction introduces a second double bond into the aromatic ring system. The polypeptide is Chorismate synthase (Thermotoga maritima (strain ATCC 43589 / DSM 3109 / JCM 10099 / NBRC 100826 / MSB8)).